Reading from the N-terminus, the 374-residue chain is Anhydro-N-acetylmuramic acid kinase (374 aa).

9–16 (GTSLDGID) serves as a coordination point for ATP.

The protein belongs to the anhydro-N-acetylmuramic acid kinase family.

It carries out the reaction 1,6-anhydro-N-acetyl-beta-muramate + ATP + H2O = N-acetyl-D-muramate 6-phosphate + ADP + H(+). The protein operates within amino-sugar metabolism; 1,6-anhydro-N-acetylmuramate degradation. It functions in the pathway cell wall biogenesis; peptidoglycan recycling. Functionally, catalyzes the specific phosphorylation of 1,6-anhydro-N-acetylmuramic acid (anhMurNAc) with the simultaneous cleavage of the 1,6-anhydro ring, generating MurNAc-6-P. Is required for the utilization of anhMurNAc either imported from the medium or derived from its own cell wall murein, and thus plays a role in cell wall recycling. The polypeptide is Anhydro-N-acetylmuramic acid kinase (Methylobacterium nodulans (strain LMG 21967 / CNCM I-2342 / ORS 2060)).